Here is a 604-residue protein sequence, read N- to C-terminus: Aspartate--tRNA(Asp/Asn) ligase (604 aa).

Glu-175 is an L-aspartate binding site. The interval 199–202 (QQFK) is aspartate. L-aspartate is bound by residues Arg-221 and His-456. Position 221-223 (221-223 (RDE)) interacts with ATP. Glu-496 is an ATP binding site. Arg-503 contacts L-aspartate. 548–551 (GVDR) provides a ligand contact to ATP.

This sequence belongs to the class-II aminoacyl-tRNA synthetase family. Type 1 subfamily. Homodimer.

Its subcellular location is the cytoplasm. The enzyme catalyses tRNA(Asx) + L-aspartate + ATP = L-aspartyl-tRNA(Asx) + AMP + diphosphate. Aspartyl-tRNA synthetase with relaxed tRNA specificity since it is able to aspartylate not only its cognate tRNA(Asp) but also tRNA(Asn). Reaction proceeds in two steps: L-aspartate is first activated by ATP to form Asp-AMP and then transferred to the acceptor end of tRNA(Asp/Asn). The protein is Aspartate--tRNA(Asp/Asn) ligase of Methylobacterium nodulans (strain LMG 21967 / CNCM I-2342 / ORS 2060).